The primary structure comprises 294 residues: 33 kDa chaperonin (294 aa).

2 disulfides stabilise this stretch: cysteine 239–cysteine 241 and cysteine 272–cysteine 275.

It belongs to the HSP33 family. Under oxidizing conditions two disulfide bonds are formed involving the reactive cysteines. Under reducing conditions zinc is bound to the reactive cysteines and the protein is inactive.

Its subcellular location is the cytoplasm. Its function is as follows. Redox regulated molecular chaperone. Protects both thermally unfolding and oxidatively damaged proteins from irreversible aggregation. Plays an important role in the bacterial defense system toward oxidative stress. This Listeria monocytogenes serotype 4a (strain HCC23) protein is 33 kDa chaperonin.